We begin with the raw amino-acid sequence, 300 residues long: Estradiol 17-beta-dehydrogenase 11 (300 aa).

The N-terminal stretch at 1-19 (MKFLLDILLLLPLLIVCSL) is a signal peptide. An NADP(+)-binding site is contributed by 40–64 (LITGAGHGIGRLTAYEFAKLKSKLV). Serine 172 serves as a coordination point for substrate. The active-site Proton acceptor is tyrosine 185.

This sequence belongs to the short-chain dehydrogenases/reductases (SDR) family. 17-beta-HSD 3 subfamily. In terms of tissue distribution, present at high level in steroidogenic cells such as syncytiotrophoblasts, sebaceous gland, Leydig cells, and granulosa cells of the dominant follicle and corpus luteum. In lung, it is detected in the ciliated epithelium and in acini of adult trachea, in bronchioles, but not in alveoli. In the eye, it is detected in the nonpigmented epithelium of the ciliary body and, at lower level, in the inner nuclear layer of the retina (at protein level). Widely expressed. Highly expressed in retina, pancreas, kidney, liver, lung, adrenal, small intestine, ovary and heart.

It localises to the endoplasmic reticulum. The protein resides in the lipid droplet. It carries out the reaction 17beta-estradiol + NAD(+) = estrone + NADH + H(+). The enzyme catalyses 17beta-estradiol + NADP(+) = estrone + NADPH + H(+). Can convert androstan-3-alpha,17-beta-diol (3-alpha-diol) to androsterone in vitro, suggesting that it may participate in androgen metabolism during steroidogenesis. May act by metabolizing compounds that stimulate steroid synthesis and/or by generating metabolites that inhibit it. Has no activity toward DHEA (dehydroepiandrosterone), or A-dione (4-androste-3,17-dione), and only a slight activity toward testosterone to A-dione. Tumor-associated antigen in cutaneous T-cell lymphoma. The polypeptide is Estradiol 17-beta-dehydrogenase 11 (HSD17B11) (Homo sapiens (Human)).